The primary structure comprises 371 residues: tRNA/tmRNA (uracil-C(5))-methyltransferase (371 aa).

Positions 194, 223, 228, 244, and 304 each coordinate S-adenosyl-L-methionine. Cys-329 acts as the Nucleophile in catalysis. Glu-363 (proton acceptor) is an active-site residue.

It belongs to the class I-like SAM-binding methyltransferase superfamily. RNA M5U methyltransferase family. TrmA subfamily.

The catalysed reaction is uridine(54) in tRNA + S-adenosyl-L-methionine = 5-methyluridine(54) in tRNA + S-adenosyl-L-homocysteine + H(+). The enzyme catalyses uridine(341) in tmRNA + S-adenosyl-L-methionine = 5-methyluridine(341) in tmRNA + S-adenosyl-L-homocysteine + H(+). Its function is as follows. Dual-specificity methyltransferase that catalyzes the formation of 5-methyluridine at position 54 (m5U54) in all tRNAs, and that of position 341 (m5U341) in tmRNA (transfer-mRNA). The sequence is that of tRNA/tmRNA (uracil-C(5))-methyltransferase from Sulfurovum sp. (strain NBC37-1).